Consider the following 173-residue polypeptide: NADH-quinone oxidoreductase subunit B 1 (173 aa).

[4Fe-4S] cluster contacts are provided by cysteine 42, cysteine 43, cysteine 107, and cysteine 137.

It belongs to the complex I 20 kDa subunit family. In terms of assembly, NDH-1 is composed of 14 different subunits. Subunits NuoB, C, D, E, F, and G constitute the peripheral sector of the complex. [4Fe-4S] cluster serves as cofactor.

The protein resides in the cell inner membrane. The catalysed reaction is a quinone + NADH + 5 H(+)(in) = a quinol + NAD(+) + 4 H(+)(out). Functionally, NDH-1 shuttles electrons from NADH, via FMN and iron-sulfur (Fe-S) centers, to quinones in the respiratory chain. The immediate electron acceptor for the enzyme in this species is believed to be ubiquinone. Couples the redox reaction to proton translocation (for every two electrons transferred, four hydrogen ions are translocated across the cytoplasmic membrane), and thus conserves the redox energy in a proton gradient. This Anaeromyxobacter sp. (strain K) protein is NADH-quinone oxidoreductase subunit B 1.